Reading from the N-terminus, the 174-residue chain is Protein COFACTOR ASSEMBLY OF COMPLEX C SUBUNIT B CCB3, chloroplastic (174 aa).

Residues 1–39 constitute a chloroplast transit peptide; it reads MTTVTTSFVSFSPALMIFQKKSRRSSPNFRNRSTSLPIV. The Lumenal segment spans residues 40–78; sequence SATLSHIEEAATTTNLIRQTNSISESLRNISLADLDPGT. The helical transmembrane segment at 79–99 threads the bilayer; sequence AKLAIGILGPALSAFGFLFIL. Over 100–147 the chain is Stromal; the sequence is RIVMSWYPKLPVDKFPYVLAYAPTEPILVQTRKVIPPLAGVDVTPVVW. Residues 148-168 form a helical membrane-spanning segment; sequence FGLVSFLSEILVGPQGLLVLV. Residues 169-174 are Lumenal-facing; it reads SQQQVN.

This sequence belongs to the YggT family.

Its subcellular location is the plastid. It is found in the chloroplast thylakoid membrane. Functionally, required for the biogenesis and accumulation of native cytochrome b6 in the thylakoid membrane. Controls the conversion of apocytochrome b6 to holocytochrome b6. Required for covalent binding of the c-type heme to cytochrome b6. The chain is Protein COFACTOR ASSEMBLY OF COMPLEX C SUBUNIT B CCB3, chloroplastic from Arabidopsis thaliana (Mouse-ear cress).